The primary structure comprises 248 residues: Probable proteasome subunit alpha type-3 (248 aa).

It belongs to the peptidase T1A family. As to quaternary structure, the 26S proteasome consists of a 20S proteasome core and two 19S regulatory subunits. The 20S proteasome core is composed of 28 subunits that are arranged in four stacked rings, resulting in a barrel-shaped structure. The two end rings are each formed by seven alpha subunits, and the two central rings are each formed by seven beta subunits. The catalytic chamber with the active sites is on the inside of the barrel.

The protein resides in the cytoplasm. It localises to the nucleus. Functionally, the proteasome is a multicatalytic proteinase complex which is characterized by its ability to cleave peptides with Arg, Phe, Tyr, Leu, and Glu adjacent to the leaving group at neutral or slightly basic pH. The proteasome has an ATP-dependent proteolytic activity. The sequence is that of Probable proteasome subunit alpha type-3 from Schizosaccharomyces pombe (strain 972 / ATCC 24843) (Fission yeast).